The following is a 165-amino-acid chain: Endoribonuclease YbeY (165 aa).

His130, His134, and His140 together coordinate Zn(2+).

The protein belongs to the endoribonuclease YbeY family. The cofactor is Zn(2+).

Its subcellular location is the cytoplasm. Functionally, single strand-specific metallo-endoribonuclease involved in late-stage 70S ribosome quality control and in maturation of the 3' terminus of the 16S rRNA. The protein is Endoribonuclease YbeY of Streptococcus gordonii (strain Challis / ATCC 35105 / BCRC 15272 / CH1 / DL1 / V288).